The primary structure comprises 717 residues: MDKINPDWARDVPCRNVIIYGFCKKKTEGCPFKHDDDDIATPTSTPKVADTVPAPSGVIQQPSKISVSSLPSLNSQPSSTAPTSAPNATAHTGSKSQVPKFNAKASASFTPMSKAADGTQETQAPYLESPVAGSPGPILKAGTPVSFMQPNIYSTTPVPSPASMAMPNVVMPPNDMGSPDLGLQQQSHMVNLDGSIQQNYQERPNVLMRDSSMPLTMGTSGSRPMLDQQIHSISGLSNTSGPQPPGLLQSMNGASMDMGLPMNLRYPTIYPPTHSILQYHLYAPDPPPQLEIALKENERTPRMLFIPNDLREELVKRNLASLQLFPSGGNLPHIVKDYFGLVPLDFHQRSSVKDRYKKHKNSLYKVFSNVDGRIYLLRRIHDVNISDPTIISKTFQKWSKIDSSNVVALKDLFLTTAFGDSSLGIVYDYYPNATSLYEAHFVNYPTVEVTEDLLWSYAVQILNGLREIHNTNGVNIGDLDCDKIILTGKGRIKISAGAEYDIMNMCCPEDNEDDDNEEKLRKRNFVDLGEILFKLASKMCNCHGKDVANLAQVSEKLKNLIKSLAFEQLHDYVNVATIIEKYIGLDVVFKVMEAQQTYSEYAENVLSRELENGRLFRLICKLNFIFGRVENRLDINWSEPGDKFVIVLFYDYVFHQIDPNTGKPVTDLTHVLRCLNKLDAGVEENILLVTPDELNTAVVSYKKVKELVDKTFRAMTL.

The segment at 8-37 (WARDVPCRNVIIYGFCKKKTEGCPFKHDDD) adopts a C3H1-type zinc-finger fold. The segment at 37 to 100 (DDIATPTSTP…HTGSKSQVPK (64 aa)) is disordered. The span at 62–90 (PSKISVSSLPSLNSQPSSTAPTSAPNATA) shows a compositional bias: low complexity. Polar residues predominate over residues 91–100 (HTGSKSQVPK). Residues 323 to 585 (QLFPSGGNLP…ATIIEKYIGL (263 aa)) are pseudokinase domain. ATP is bound by residues Arg378, 428–435 (DYYPNATS), and 482–483 (DK). Residues 586-624 (DVVFKVMEAQQTYSEYAENVLSRELENGRLFRLICKLNF) adopt a coiled-coil conformation. The interval 625-717 (IFGRVENRLD…VDKTFRAMTL (93 aa)) is knob domain.

This sequence belongs to the protein kinase superfamily. PAN3 family. As to quaternary structure, homodimer. Forms a heterotrimer with a catalytic subunit PAN2 to form the poly(A)-nuclease (PAN) deadenylation complex. Interacts (via PAM-2 motif) with poly(A)-binding protein PAB1 (via PABC domain), conferring substrate specificity of the enzyme complex.

The protein resides in the cytoplasm. Its function is as follows. Regulatory subunit of the poly(A)-nuclease (PAN) deadenylation complex, one of two cytoplasmic mRNA deadenylases involved in mRNA turnover. PAN specifically shortens poly(A) tails of RNA and the activity is stimulated by poly(A)-binding protein PAB1. PAN deadenylation is followed by rapid degradation of the shortened mRNA tails by the CCR4-NOT complex. Deadenylated mRNAs are then degraded by two alternative mechanisms, namely exosome-mediated 3'-5' exonucleolytic degradation, or deadenylation-dependent mRNA decaping and subsequent 5'-3' exonucleolytic degradation by XRN1. May also be involved in post-transcriptional maturation of mRNA poly(A) tails. PAN3 acts as a positive regulator for PAN activity, recruiting the catalytic subunit PAN2 to mRNA via its interaction with RNA and with PAB1. The chain is PAN2-PAN3 deadenylation complex subunit PAN3 from Candida glabrata (strain ATCC 2001 / BCRC 20586 / JCM 3761 / NBRC 0622 / NRRL Y-65 / CBS 138) (Yeast).